Reading from the N-terminus, the 179-residue chain is Large ribosomal subunit protein uL5 (179 aa).

This sequence belongs to the universal ribosomal protein uL5 family. In terms of assembly, part of the 50S ribosomal subunit; part of the 5S rRNA/L5/L18/L25 subcomplex. Contacts the 5S rRNA and the P site tRNA. Forms a bridge to the 30S subunit in the 70S ribosome.

In terms of biological role, this is one of the proteins that bind and probably mediate the attachment of the 5S RNA into the large ribosomal subunit, where it forms part of the central protuberance. In the 70S ribosome it contacts protein S13 of the 30S subunit (bridge B1b), connecting the 2 subunits; this bridge is implicated in subunit movement. Contacts the P site tRNA; the 5S rRNA and some of its associated proteins might help stabilize positioning of ribosome-bound tRNAs. This Bacillus pumilus (strain SAFR-032) protein is Large ribosomal subunit protein uL5.